The sequence spans 531 residues: NADH-quinone oxidoreductase subunit N (531 aa).

Transmembrane regions (helical) follow at residues 8–28 (VEYFLLAPMLIVFSVAVAGVL), 41–61 (AQVTLALGGSAVALIAVIVVA), 81–101 (ATLFLQGTVLLVTIMAVVFMA), 146–166 (GATQTELFPLAMLSVGGMMVF), 172–192 (LLTMFVALEVLSLPLYLMCGL), 208–228 (FLLGAFSSAFFLYGVALLYGA), 250–270 (ALAGVALLAVGLLFKVGAVPF), 282–302 (PTPITGFMAAATKVAAFGALL), 318–338 (PVLWAIAILTMTVGTVTAVNQ), 350–370 (VAHVGFILTGVIADNPAGLSA), 372–392 (LFYLVAYSFSTMGAFAIVGLV), 418–438 (IVGVMLSMFLLAFAGIPLTSG), 453–473 (GAVPLVIVGVISSGVAAYFYV), and 500–520 (AAIAVCTVVTVVLGIAPQPVL).

This sequence belongs to the complex I subunit 2 family. NDH-1 is composed of 14 different subunits. Subunits NuoA, H, J, K, L, M, N constitute the membrane sector of the complex.

It is found in the cell membrane. It carries out the reaction a quinone + NADH + 5 H(+)(in) = a quinol + NAD(+) + 4 H(+)(out). Functionally, NDH-1 shuttles electrons from NADH, via FMN and iron-sulfur (Fe-S) centers, to quinones in the respiratory chain. The immediate electron acceptor for the enzyme in this species is believed to be a menaquinone. Couples the redox reaction to proton translocation (for every two electrons transferred, four hydrogen ions are translocated across the cytoplasmic membrane), and thus conserves the redox energy in a proton gradient. The sequence is that of NADH-quinone oxidoreductase subunit N from Mycobacterium bovis (strain ATCC BAA-935 / AF2122/97).